The sequence spans 342 residues: Ribosomal RNA small subunit methyltransferase C (342 aa).

Belongs to the methyltransferase superfamily. RsmC family. In terms of assembly, monomer.

It is found in the cytoplasm. It catalyses the reaction guanosine(1207) in 16S rRNA + S-adenosyl-L-methionine = N(2)-methylguanosine(1207) in 16S rRNA + S-adenosyl-L-homocysteine + H(+). Functionally, specifically methylates the guanine in position 1207 of 16S rRNA in the 30S particle. The polypeptide is Ribosomal RNA small subunit methyltransferase C (Aeromonas hydrophila subsp. hydrophila (strain ATCC 7966 / DSM 30187 / BCRC 13018 / CCUG 14551 / JCM 1027 / KCTC 2358 / NCIMB 9240 / NCTC 8049)).